The chain runs to 266 residues: Dihydropteroate synthase (266 aa).

In terms of domain architecture, Pterin-binding spans 12–260 (AAIMGILNVT…DVKANQEIVA (249 aa)). Asn19 contributes to the Mg(2+) binding site. (7,8-dihydropterin-6-yl)methyl diphosphate is bound by residues Thr59, Asp93, Asn112, Asp176, Lys212, and 248-250 (RVH).

Belongs to the DHPS family. As to quaternary structure, homodimer or homotrimer. Requires Mg(2+) as cofactor.

The catalysed reaction is (7,8-dihydropterin-6-yl)methyl diphosphate + 4-aminobenzoate = 7,8-dihydropteroate + diphosphate. It functions in the pathway cofactor biosynthesis; tetrahydrofolate biosynthesis; 7,8-dihydrofolate from 2-amino-4-hydroxy-6-hydroxymethyl-7,8-dihydropteridine diphosphate and 4-aminobenzoate: step 1/2. Its function is as follows. Catalyzes the condensation of para-aminobenzoate (pABA) with 6-hydroxymethyl-7,8-dihydropterin diphosphate (DHPt-PP) to form 7,8-dihydropteroate (H2Pte), the immediate precursor of folate derivatives. In Streptococcus pyogenes, this protein is Dihydropteroate synthase (folP).